We begin with the raw amino-acid sequence, 347 residues long: Phenylalanine--tRNA ligase alpha subunit (347 aa).

Residue E261 participates in Mg(2+) binding.

The protein belongs to the class-II aminoacyl-tRNA synthetase family. Phe-tRNA synthetase alpha subunit type 1 subfamily. In terms of assembly, tetramer of two alpha and two beta subunits. The cofactor is Mg(2+).

Its subcellular location is the cytoplasm. The enzyme catalyses tRNA(Phe) + L-phenylalanine + ATP = L-phenylalanyl-tRNA(Phe) + AMP + diphosphate + H(+). The chain is Phenylalanine--tRNA ligase alpha subunit from Streptococcus pyogenes serotype M3 (strain ATCC BAA-595 / MGAS315).